A 456-amino-acid polypeptide reads, in one-letter code: MSLDIQCEQLSDARWTELLPLIQQYEVVRLDDCGLTEVRCKDISSAVQANPALTELSLRTNELGDGGVGLVLQGLQNPTCKIQKLSLQNCGLTEAGCGILPGMLRSLSTLRELHLNDNPMGDAGLKLLCEGLQDPQCRLEKLQLEYCNLTATSCEPLASVLRVKADFKELVLSNNDLHEPGVRILCQGLKDSACQLESLKLENCGITAANCKDLCDVVASKASLQELDLSSNKLGNAGIAALCPGLLLPSCKLRTLWLWECDITAEGCKDLCRVLRAKQSLKELSLASNELKDEGARLLCESLLEPGCQLESLWIKTCSLTAASCPYFCSVLTKSRSLLELQMSSNPLGDEGVQELCKALSQPDTVLRELWLGDCDVTNSGCSSLANVLLANRSLRELDLSNNCMGGPGVLQLLESLKQPSCTLQQLVLYDIYWTNEVEEQLRALEEERPSLRIIS.

An N-acetylmethionine modification is found at methionine 1. LRR repeat units follow at residues 15-43 (WTELLPLIQQYEVVRLDDCGLTEVRCKDI), 44-71 (SSAVQANPALTELSLRTNELGDGGVGLV), 72-100 (LQGLQNPTCKIQKLSLQNCGLTEAGCGIL), 101-128 (PGMLRSLSTLRELHLNDNPMGDAGLKLL), 129-157 (CEGLQDPQCRLEKLQLEYCNLTATSCEPL), 158-185 (ASVLRVKADFKELVLSNNDLHEPGVRIL), 186-214 (CQGLKDSACQLESLKLENCGITAANCKDL), 215-242 (CDVVASKASLQELDLSSNKLGNAGIAAL), 243-271 (CPGLLLPSCKLRTLWLWECDITAEGCKDL), 272-299 (CRVLRAKQSLKELSLASNELKDEGARLL), 300-328 (CESLLEPGCQLESLWIKTCSLTAASCPYF), 329-356 (CSVLTKSRSLLELQMSSNPLGDEGVQEL), 357-385 (CKALSQPDTVLRELWLGDCDVTNSGCSSL), 386-413 (ANVLLANRSLRELDLSNNCMGGPGVLQL), and 414-442 (LESLKQPSCTLQQLVLYDIYWTNEVEEQL). Serine 86 carries the post-translational modification Phosphoserine.

Forms high-affinity heterodimers with RNASE1, ANG and RNASE2.

It is found in the cytoplasm. The protein localises to the nucleus. Its function is as follows. Ribonuclease inhibitor which inhibits RNASE1, RNASE2 and angiogenin (ANG). May play a role in redox homeostasis. Required to inhibit the cytotoxic tRNA ribonuclease activity of ANG in the cytoplasm in absence of stress. Relocates to the nucleus in response to stress, relieving inhibition of ANG in the cytoplasm, and inhibiting the angiogenic activity of ANG in the nucleus. This is Ribonuclease inhibitor (Rnh1) from Mus musculus (Mouse).